A 513-amino-acid chain; its full sequence is ATP synthase subunit alpha 1 (513 aa).

Position 169-176 (169-176 (GDRQTGKT)) interacts with ATP.

It belongs to the ATPase alpha/beta chains family. F-type ATPases have 2 components, CF(1) - the catalytic core - and CF(0) - the membrane proton channel. CF(1) has five subunits: alpha(3), beta(3), gamma(1), delta(1), epsilon(1). CF(0) has three main subunits: a(1), b(2) and c(9-12). The alpha and beta chains form an alternating ring which encloses part of the gamma chain. CF(1) is attached to CF(0) by a central stalk formed by the gamma and epsilon chains, while a peripheral stalk is formed by the delta and b chains.

The protein resides in the cell inner membrane. It carries out the reaction ATP + H2O + 4 H(+)(in) = ADP + phosphate + 5 H(+)(out). Functionally, produces ATP from ADP in the presence of a proton gradient across the membrane. The alpha chain is a regulatory subunit. The chain is ATP synthase subunit alpha 1 from Photobacterium profundum (strain SS9).